Consider the following 254-residue polypeptide: Protein GVQW3 (254 aa).

The sequence is that of Protein GVQW3 from Homo sapiens (Human).